Here is a 224-residue protein sequence, read N- to C-terminus: Flagellar L-ring protein (224 aa).

Positions Met-1–Ala-15 are cleaved as a signal peptide. Cys-16 carries N-palmitoyl cysteine lipidation. The S-diacylglycerol cysteine moiety is linked to residue Cys-16.

This sequence belongs to the FlgH family. The basal body constitutes a major portion of the flagellar organelle and consists of four rings (L,P,S, and M) mounted on a central rod.

The protein localises to the cell outer membrane. It localises to the bacterial flagellum basal body. Its function is as follows. Assembles around the rod to form the L-ring and probably protects the motor/basal body from shearing forces during rotation. This chain is Flagellar L-ring protein, found in Shewanella baltica (strain OS185).